The chain runs to 270 residues: 3-phenylpropionate-dihydrodiol/cinnamic acid-dihydrodiol dehydrogenase (270 aa).

10–34 (FITGGGSGLGLALVERFIEEGAQVA) contributes to the NAD(+) binding site. Substrate is bound at residue Ser143. Tyr156 serves as the catalytic Proton acceptor.

This sequence belongs to the short-chain dehydrogenases/reductases (SDR) family.

It carries out the reaction 3-(cis-5,6-dihydroxycyclohexa-1,3-dien-1-yl)propanoate + NAD(+) = 3-(2,3-dihydroxyphenyl)propanoate + NADH + H(+). The enzyme catalyses (2E)-3-(cis-5,6-dihydroxycyclohexa-1,3-dien-1-yl)prop-2-enoate + NAD(+) = (2E)-3-(2,3-dihydroxyphenyl)prop-2-enoate + NADH + H(+). The protein operates within aromatic compound metabolism; 3-phenylpropanoate degradation. Functionally, converts 3-phenylpropionate-dihydrodiol (PP-dihydrodiol) and cinnamic acid-dihydrodiol (CI-dihydrodiol) into 3-(2,3-dihydroxylphenyl)propanoic acid (DHPP) and 2,3-dihydroxicinnamic acid (DHCI), respectively. This Escherichia coli (strain SMS-3-5 / SECEC) protein is 3-phenylpropionate-dihydrodiol/cinnamic acid-dihydrodiol dehydrogenase.